The following is a 619-amino-acid chain: Mitochondrial Rho GTPase 1-A (619 aa).

At 1 to 593 the chain is on the cytoplasmic side; the sequence is MRKDVRILLV…TQADLKNSTF (593 aa). The Miro 1 domain maps to 2–168; that stretch reads RKDVRILLVG…FYYAQKAVLH (167 aa). Residues K14, G16, K17, T18, and S19 each coordinate GTP. T18 contacts Mg(2+). Mg(2+)-binding residues include P35 and D57. The GTP site is built by S59, N118, K119, D121, A149, and K150. EF-hand domains lie at 184–219 and 304–339; these read SCIK…CFNI and NAYL…FPYM. The Ca(2+) site is built by D197, D199, D201, E208, D317, D319, D321, A323, and E328. The region spanning 416 to 580 is the Miro 2 domain; the sequence is RSVFRCNVLG…YTKLTTMAMY (165 aa). R427, C429, G430, K431, S432, G433, K447, K529, D531, T559, and C560 together coordinate GTP. R427 provides a ligand contact to Mg(2+). A helical; Anchor for type IV membrane protein membrane pass occupies residues 594 to 616; it reads WLRASVGATVFAVLGFAMYKALL. Topologically, residues 617 to 619 are mitochondrial intermembrane; the sequence is KQR.

The protein belongs to the mitochondrial Rho GTPase family. As to quaternary structure, homodimer.

The protein localises to the mitochondrion outer membrane. The catalysed reaction is GTP + H2O = GDP + phosphate + H(+). It catalyses the reaction ATP + H2O = ADP + phosphate + H(+). The enzyme catalyses UTP + H2O = UDP + phosphate + H(+). In terms of biological role, atypical mitochondrial nucleoside-triphosphatase (NTPase) involved in mitochondrial trafficking. Probably involved in control of anterograde transport of mitochondria and their subcellular distribution. Can hydrolyze GTP, ATP and UTP. This is Mitochondrial Rho GTPase 1-A (rhot1a) from Danio rerio (Zebrafish).